The chain runs to 502 residues: D-alanine--D-alanyl carrier protein ligase (502 aa).

ATP is bound at residue 150-151; the sequence is TS. Aspartate 195 provides a ligand contact to D-alanine. 290–295 provides a ligand contact to ATP; sequence NTYGPT. Position 299 (valine 299) interacts with D-alanine. Aspartate 381 and lysine 490 together coordinate ATP. Residue lysine 490 coordinates D-alanine.

It belongs to the ATP-dependent AMP-binding enzyme family. DltA subfamily.

Its subcellular location is the cytoplasm. It carries out the reaction holo-[D-alanyl-carrier protein] + D-alanine + ATP = D-alanyl-[D-alanyl-carrier protein] + AMP + diphosphate. The protein operates within cell wall biogenesis; lipoteichoic acid biosynthesis. Functionally, catalyzes the first step in the D-alanylation of lipoteichoic acid (LTA), the activation of D-alanine and its transfer onto the D-alanyl carrier protein (Dcp) DltC. In an ATP-dependent two-step reaction, forms a high energy D-alanyl-AMP intermediate, followed by transfer of the D-alanyl residue as a thiol ester to the phosphopantheinyl prosthetic group of the Dcp. D-alanylation of LTA plays an important role in modulating the properties of the cell wall in Gram-positive bacteria, influencing the net charge of the cell wall. This is D-alanine--D-alanyl carrier protein ligase from Bacillus licheniformis (strain ATCC 14580 / DSM 13 / JCM 2505 / CCUG 7422 / NBRC 12200 / NCIMB 9375 / NCTC 10341 / NRRL NRS-1264 / Gibson 46).